The primary structure comprises 346 residues: Uroporphyrinogen decarboxylase (346 aa).

Residues R23 to R27, D72, Y155, S209, and H322 each bind substrate.

Belongs to the uroporphyrinogen decarboxylase family. As to quaternary structure, homodimer.

Its subcellular location is the cytoplasm. It carries out the reaction uroporphyrinogen III + 4 H(+) = coproporphyrinogen III + 4 CO2. The protein operates within porphyrin-containing compound metabolism; protoporphyrin-IX biosynthesis; coproporphyrinogen-III from 5-aminolevulinate: step 4/4. Functionally, catalyzes the decarboxylation of four acetate groups of uroporphyrinogen-III to yield coproporphyrinogen-III. The chain is Uroporphyrinogen decarboxylase from Anaeromyxobacter sp. (strain Fw109-5).